We begin with the raw amino-acid sequence, 435 residues long: MKTTYVNATIVTMNEQNEVIENGYIIVENDQIIDVKSGEFANDFEVDEVIDMKGKWVLPGLVNTHTHVVMSLLRGIGDDMLLQPWLETRIWPLESQFTPELAVASTELGLLEMVKSGTTSFSDMFNPIGVDQDAIMETVSRSGMRAAVSRTLFSFGTKDDEKKAIEEAEKYVKRYYKESGMLTTMVAPHSPYTCSTELLEECARIAVENQTMVHIHLSETEREVRDIEAQYGKRPVEYAASCGLFKRPTVIAHGVVLNENERAFLAEHDVRVAHNPNSNLKLGSGIANVKAMLEAGMKVGIATDSVASNNNLDMFEEMRIATLLQKGIHQDATALPVETALTLATKGAAEVIGMKQTGSLEVGKCADFITIDPSNKPHLQPADEVLSHLVYAASGKDISDVIINGKRVVWNGECKTLDEERIIFEASRYKRGLQR.

Residues His-65 and His-67 each coordinate Zn(2+). 3 residues coordinate substrate: Glu-94, Arg-150, and His-189. A Zn(2+)-binding site is contributed by His-216. Positions 219 and 304 each coordinate substrate. Asp-304 contacts Zn(2+).

This sequence belongs to the metallo-dependent hydrolases superfamily. MTA/SAH deaminase family. The cofactor is Zn(2+).

The catalysed reaction is S-adenosyl-L-homocysteine + H2O + H(+) = S-inosyl-L-homocysteine + NH4(+). The enzyme catalyses S-methyl-5'-thioadenosine + H2O + H(+) = S-methyl-5'-thioinosine + NH4(+). Catalyzes the deamination of 5-methylthioadenosine and S-adenosyl-L-homocysteine into 5-methylthioinosine and S-inosyl-L-homocysteine, respectively. Is also able to deaminate adenosine. The protein is 5-methylthioadenosine/S-adenosylhomocysteine deaminase of Bacillus cereus (strain G9842).